The primary structure comprises 171 residues: Large ribosomal subunit protein uL10 (171 aa).

Belongs to the universal ribosomal protein uL10 family. Part of the ribosomal stalk of the 50S ribosomal subunit. The N-terminus interacts with L11 and the large rRNA to form the base of the stalk. The C-terminus forms an elongated spine to which L12 dimers bind in a sequential fashion forming a multimeric L10(L12)X complex.

In terms of biological role, forms part of the ribosomal stalk, playing a central role in the interaction of the ribosome with GTP-bound translation factors. This is Large ribosomal subunit protein uL10 from Paramagnetospirillum magneticum (strain ATCC 700264 / AMB-1) (Magnetospirillum magneticum).